Consider the following 353-residue polypeptide: S-adenosylmethionine:tRNA ribosyltransferase-isomerase (353 aa).

This sequence belongs to the QueA family. As to quaternary structure, monomer.

It localises to the cytoplasm. It catalyses the reaction 7-aminomethyl-7-carbaguanosine(34) in tRNA + S-adenosyl-L-methionine = epoxyqueuosine(34) in tRNA + adenine + L-methionine + 2 H(+). It functions in the pathway tRNA modification; tRNA-queuosine biosynthesis. Transfers and isomerizes the ribose moiety from AdoMet to the 7-aminomethyl group of 7-deazaguanine (preQ1-tRNA) to give epoxyqueuosine (oQ-tRNA). The protein is S-adenosylmethionine:tRNA ribosyltransferase-isomerase of Paraburkholderia phymatum (strain DSM 17167 / CIP 108236 / LMG 21445 / STM815) (Burkholderia phymatum).